We begin with the raw amino-acid sequence, 332 residues long: Fructose-1,6-bisphosphatase class 1 (332 aa).

Positions 89, 110, 112, and 113 each coordinate Mg(2+). Substrate-binding positions include 113–116 (DGSS), Asn-206, Tyr-239, 257–259 (YLY), and Lys-269. Position 275 (Glu-275) interacts with Mg(2+).

Belongs to the FBPase class 1 family. As to quaternary structure, homotetramer. Mg(2+) serves as cofactor.

It localises to the cytoplasm. The catalysed reaction is beta-D-fructose 1,6-bisphosphate + H2O = beta-D-fructose 6-phosphate + phosphate. Its pathway is carbohydrate biosynthesis; gluconeogenesis. This Salmonella typhimurium (strain LT2 / SGSC1412 / ATCC 700720) protein is Fructose-1,6-bisphosphatase class 1.